A 150-amino-acid chain; its full sequence is 6,7-dimethyl-8-ribityllumazine synthase (150 aa).

5-amino-6-(D-ribitylamino)uracil is bound by residues Phe-11, 42-44, and 73-75; these read IFE and CAI. 78–79 contributes to the (2S)-2-hydroxy-3-oxobutyl phosphate binding site; the sequence is ES. His-81 (proton donor) is an active-site residue. 5-amino-6-(D-ribitylamino)uracil is bound at residue Asn-106. Arg-120 serves as a coordination point for (2S)-2-hydroxy-3-oxobutyl phosphate.

This sequence belongs to the DMRL synthase family.

It carries out the reaction (2S)-2-hydroxy-3-oxobutyl phosphate + 5-amino-6-(D-ribitylamino)uracil = 6,7-dimethyl-8-(1-D-ribityl)lumazine + phosphate + 2 H2O + H(+). Its pathway is cofactor biosynthesis; riboflavin biosynthesis; riboflavin from 2-hydroxy-3-oxobutyl phosphate and 5-amino-6-(D-ribitylamino)uracil: step 1/2. In terms of biological role, catalyzes the formation of 6,7-dimethyl-8-ribityllumazine by condensation of 5-amino-6-(D-ribitylamino)uracil with 3,4-dihydroxy-2-butanone 4-phosphate. This is the penultimate step in the biosynthesis of riboflavin. This chain is 6,7-dimethyl-8-ribityllumazine synthase, found in Paramagnetospirillum magneticum (strain ATCC 700264 / AMB-1) (Magnetospirillum magneticum).